The primary structure comprises 269 residues: uncharacterized protein (269 aa).

Residues 12–19 (GKGGTGKS) and 130–137 (GYLIVGKS) contribute to the ATP site.

To M.jannaschii MJ0578.

This is an uncharacterized protein from Methanocaldococcus jannaschii (strain ATCC 43067 / DSM 2661 / JAL-1 / JCM 10045 / NBRC 100440) (Methanococcus jannaschii).